The chain runs to 208 residues: Ribosomal RNA large subunit methyltransferase E (208 aa).

The S-adenosyl-L-methionine site is built by glycine 62, tryptophan 64, aspartate 82, aspartate 98, and aspartate 123. The Proton acceptor role is filled by lysine 163.

It belongs to the class I-like SAM-binding methyltransferase superfamily. RNA methyltransferase RlmE family.

The protein resides in the cytoplasm. It catalyses the reaction uridine(2552) in 23S rRNA + S-adenosyl-L-methionine = 2'-O-methyluridine(2552) in 23S rRNA + S-adenosyl-L-homocysteine + H(+). Specifically methylates the uridine in position 2552 of 23S rRNA at the 2'-O position of the ribose in the fully assembled 50S ribosomal subunit. This is Ribosomal RNA large subunit methyltransferase E from Mannheimia succiniciproducens (strain KCTC 0769BP / MBEL55E).